The sequence spans 460 residues: Cysteine--tRNA ligase (460 aa).

Residue Cys29 coordinates Zn(2+). The short motif at 31 to 41 (ATPQSSPHIGH) is the 'HIGH' region element. Zn(2+) is bound by residues Cys212, His237, and Glu241. A 'KMSKS' region motif is present at residues 268–272 (KMSKS). Residue Lys271 coordinates ATP.

It belongs to the class-I aminoacyl-tRNA synthetase family. Monomer. Zn(2+) serves as cofactor.

Its subcellular location is the cytoplasm. The enzyme catalyses tRNA(Cys) + L-cysteine + ATP = L-cysteinyl-tRNA(Cys) + AMP + diphosphate. The sequence is that of Cysteine--tRNA ligase from Corynebacterium glutamicum (strain R).